A 222-amino-acid chain; its full sequence is Translation initiation factor 6 (222 aa).

The protein belongs to the eIF-6 family.

In terms of biological role, binds to the 50S ribosomal subunit and prevents its association with the 30S ribosomal subunit to form the 70S initiation complex. In Methanocorpusculum labreanum (strain ATCC 43576 / DSM 4855 / Z), this protein is Translation initiation factor 6.